The following is a 328-amino-acid chain: tRNA uridine(34) hydroxylase (328 aa).

The 95-residue stretch at 123–217 (SDPETVLIDT…YLEEVPKEKS (95 aa)) folds into the Rhodanese domain. Cysteine 177 serves as the catalytic Cysteine persulfide intermediate. The interval 304–328 (AKKLAQLNKQKKQQAKEAARKKAQQ) is disordered. Residues 317-328 (QAKEAARKKAQQ) are compositionally biased toward basic and acidic residues.

This sequence belongs to the TrhO family.

It carries out the reaction uridine(34) in tRNA + AH2 + O2 = 5-hydroxyuridine(34) in tRNA + A + H2O. Catalyzes oxygen-dependent 5-hydroxyuridine (ho5U) modification at position 34 in tRNAs. This chain is tRNA uridine(34) hydroxylase, found in Francisella tularensis subsp. holarctica (strain LVS).